Consider the following 366-residue polypeptide: Phospho-N-acetylmuramoyl-pentapeptide-transferase (366 aa).

A run of 10 helical transmembrane segments spans residues 3–23 (QIFIAGAVAFLAAVLFTPVLI), 55–75 (IAILVGITLGYIVAVLVGLVF), 80–100 (PGVSGWLVLGLTLALGGVGFA), 118–138 (AKLICQLVIAIAFGVMILQFP), 161–181 (IAVGGAVIGMILFLIFINIVI), 197–217 (LASGVTAIVMGAYVLITFWQF), 235–255 (PLDLAMLASAGLGACLGFLWW), 262–282 (IFMGDTGSLALGGLVAGLSIT), 287–307 (LLMIIVGAIFVLETVSVVIQV), and 341–361 (FWLLAALAAMTGFGLFYGEWL).

The protein belongs to the glycosyltransferase 4 family. MraY subfamily. Mg(2+) serves as cofactor.

The protein resides in the cell membrane. It catalyses the reaction UDP-N-acetyl-alpha-D-muramoyl-L-alanyl-gamma-D-glutamyl-meso-2,6-diaminopimeloyl-D-alanyl-D-alanine + di-trans,octa-cis-undecaprenyl phosphate = di-trans,octa-cis-undecaprenyl diphospho-N-acetyl-alpha-D-muramoyl-L-alanyl-D-glutamyl-meso-2,6-diaminopimeloyl-D-alanyl-D-alanine + UMP. Its pathway is cell wall biogenesis; peptidoglycan biosynthesis. Functionally, catalyzes the initial step of the lipid cycle reactions in the biosynthesis of the cell wall peptidoglycan: transfers peptidoglycan precursor phospho-MurNAc-pentapeptide from UDP-MurNAc-pentapeptide onto the lipid carrier undecaprenyl phosphate, yielding undecaprenyl-pyrophosphoryl-MurNAc-pentapeptide, known as lipid I. In Corynebacterium urealyticum (strain ATCC 43042 / DSM 7109), this protein is Phospho-N-acetylmuramoyl-pentapeptide-transferase.